The chain runs to 275 residues: NH(3)-dependent NAD(+) synthetase (275 aa).

An ATP-binding site is contributed by 46–53 (GISGGQDS). Asp-52 lines the Mg(2+) pocket. Residue Arg-140 participates in deamido-NAD(+) binding. Thr-160 is an ATP binding site. Mg(2+) is bound at residue Glu-165. The deamido-NAD(+) site is built by Lys-173 and Asp-180. ATP contacts are provided by Lys-189 and Thr-211. Residue 260–261 (HK) coordinates deamido-NAD(+).

The protein belongs to the NAD synthetase family. Homodimer.

It carries out the reaction deamido-NAD(+) + NH4(+) + ATP = AMP + diphosphate + NAD(+) + H(+). Its pathway is cofactor biosynthesis; NAD(+) biosynthesis; NAD(+) from deamido-NAD(+) (ammonia route): step 1/1. Catalyzes the ATP-dependent amidation of deamido-NAD to form NAD. Uses ammonia as a nitrogen source. The polypeptide is NH(3)-dependent NAD(+) synthetase (Salmonella choleraesuis (strain SC-B67)).